The chain runs to 302 residues: tRNA demethylase abh1 (302 aa).

Residues tryptophan 142 and tyrosine 149 to tryptophan 151 each bind substrate. The Fe2OG dioxygenase domain maps to lysine 187–arginine 299. A 2-oxoglutarate-binding site is contributed by asparagine 194 to tyrosine 196. Residues histidine 205 and aspartate 207 each coordinate Fe cation. A substrate-binding site is contributed by arginine 235. Histidine 261 serves as a coordination point for Fe cation. Arginine 290 to arginine 296 is a binding site for 2-oxoglutarate.

Belongs to the alkB family. It depends on Fe(2+) as a cofactor.

It is found in the cytoplasm. The protein localises to the nucleus. It catalyses the reaction an N(1)-methyladenosine in tRNA + 2-oxoglutarate + O2 = an adenosine in tRNA + formaldehyde + succinate + CO2. It carries out the reaction N(1)-methyladenosine(58) in tRNA + 2-oxoglutarate + O2 = adenosine(58) in tRNA + formaldehyde + succinate + CO2. Its function is as follows. Dioxygenase that acts as on nucleic acids, such as DNA and tRNA. Requires molecular oxygen, alpha-ketoglutarate and iron. Mainly acts as a tRNA demethylase by removing N(1)-methyladenine from various tRNAs, with a preference for N(1)-methyladenine at position 58 (m1A58) present on a stem loop structure of tRNAs. Acts as a regulator of translation initiation and elongation. Does not appear to possess DNA repair activity; no activity towards methylated DNA or etheno adducts. Exhibits a weak and unstable DNA lyase activity; this activity is probably not biologically significant and proceeds by a mechanism different from the classical dioxygenase reaction as it does not require 2-oxoglutarate or iron. The polypeptide is tRNA demethylase abh1 (abh1) (Schizosaccharomyces pombe (strain 972 / ATCC 24843) (Fission yeast)).